Consider the following 364-residue polypeptide: Succinyl-diaminopimelate desuccinylase (364 aa).

His-64 contacts Zn(2+). Asp-66 is a catalytic residue. Asp-95 contacts Zn(2+). The active-site Proton acceptor is Glu-125. Zn(2+)-binding residues include Glu-126, Glu-154, and His-339.

The protein belongs to the peptidase M20A family. DapE subfamily. Homodimer. Zn(2+) is required as a cofactor. Co(2+) serves as cofactor.

It catalyses the reaction N-succinyl-(2S,6S)-2,6-diaminopimelate + H2O = (2S,6S)-2,6-diaminopimelate + succinate. The protein operates within amino-acid biosynthesis; L-lysine biosynthesis via DAP pathway; LL-2,6-diaminopimelate from (S)-tetrahydrodipicolinate (succinylase route): step 3/3. Catalyzes the hydrolysis of N-succinyl-L,L-diaminopimelic acid (SDAP), forming succinate and LL-2,6-diaminopimelate (DAP), an intermediate involved in the bacterial biosynthesis of lysine and meso-diaminopimelic acid, an essential component of bacterial cell walls. The polypeptide is Succinyl-diaminopimelate desuccinylase (Nitratiruptor sp. (strain SB155-2)).